We begin with the raw amino-acid sequence, 391 residues long: Protein CAJ1 (391 aa).

Residues 4–73 (ETEYYDILGI…RSKYDQFGKE (70 aa)) form the J domain. Positions 119–161 (KEDEEGTAATETEKADESTDGGMVKHDTNKAESLKKDKLSKEQ) are disordered. Residues 129-161 (ETEKADESTDGGMVKHDTNKAESLKKDKLSKEQ) show a composition bias toward basic and acidic residues. Lysine 132 participates in a covalent cross-link: Glycyl lysine isopeptide (Lys-Gly) (interchain with G-Cter in ubiquitin).

The protein is Protein CAJ1 (CAJ1) of Saccharomyces cerevisiae (strain ATCC 204508 / S288c) (Baker's yeast).